The primary structure comprises 888 residues: Inactive deaminase YJL070C (888 aa).

The tract at residues 1–42 (MQAVERRPSLLFDEYQNSVTKPNETKNKEARVLSENDGDVSP) is disordered. A Phosphoserine modification is found at S9. The segment covering 23–34 (NETKNKEARVLS) has biased composition (basic and acidic residues). 3 positions are modified to phosphoserine: S41, S178, and S180.

It belongs to the metallo-dependent hydrolases superfamily. Adenosine and AMP deaminases family.

The protein is Inactive deaminase YJL070C of Saccharomyces cerevisiae (strain ATCC 204508 / S288c) (Baker's yeast).